Consider the following 661-residue polypeptide: Ubiquitin carboxyl-terminal hydrolase 25 (661 aa).

One can recognise a USP domain in the interval 24–335 (LGLRNLGNTC…KAYILFFSRS (312 aa)). Catalysis depends on cysteine 33, which acts as the Nucleophile. The active-site Proton acceptor is histidine 294. Disordered stretches follow at residues 387–406 (GNLA…RAEQ) and 449–558 (FHQD…LCSS). Residues 449 to 461 (FHQDENIAPKANK) are compositionally biased toward basic and acidic residues. 2 stretches are compositionally biased toward polar residues: residues 462-475 (ENSV…VNSG) and 545-558 (NGVS…LCSS).

Belongs to the peptidase C19 family.

The catalysed reaction is Thiol-dependent hydrolysis of ester, thioester, amide, peptide and isopeptide bonds formed by the C-terminal Gly of ubiquitin (a 76-residue protein attached to proteins as an intracellular targeting signal).. Recognizes and hydrolyzes the peptide bond at the C-terminal Gly of ubiquitin. Involved in the processing of poly-ubiquitin precursors as well as that of ubiquitinated proteins. The polypeptide is Ubiquitin carboxyl-terminal hydrolase 25 (UBP25) (Arabidopsis thaliana (Mouse-ear cress)).